Here is a 255-residue protein sequence, read N- to C-terminus: Cullin-like protein 3 (255 aa).

This sequence belongs to the cullin family.

This is Cullin-like protein 3 from Arabidopsis thaliana (Mouse-ear cress).